The sequence spans 471 residues: 5-hydroxytryptamine receptor 2A (471 aa).

Topologically, residues methionine 1 to leucine 80 are extracellular. N-linked (GlcNAc...) asparagine glycosylation is found at asparagine 8, asparagine 38, asparagine 44, asparagine 51, and asparagine 54. The helical transmembrane segment at threonine 81–methionine 97 threads the bilayer. The Cytoplasmic portion of the chain corresponds to alanine 98–tyrosine 111. A helical transmembrane segment spans residues phenylalanine 112–tyrosine 137. Over glycine 138–lysine 146 the chain is Extracellular. The helical transmembrane segment at leucine 147–leucine 171 threads the bilayer. Cysteine 148 and cysteine 227 are joined by a disulfide. Aspartate 155 contributes to the serotonin binding site. A DRY motif; important for ligand-induced conformation changes motif is present at residues aspartate 172–tyrosine 174. Over aspartate 172 to lysine 191 the chain is Cytoplasmic. The chain crosses the membrane as a helical span at residues alanine 192–leucine 215. Residues glutamine 216–aspartate 232 are Extracellular-facing. The chain crosses the membrane as a helical span at residues asparagine 233 to isoleucine 258. At lysine 259–cysteine 322 the chain is on the cytoplasmic side. A Phosphoserine modification is found at serine 280. The chain crosses the membrane as a helical span at residues lysine 323–isoleucine 348. Serotonin is bound at residue asparagine 343. Cysteines 349 and 353 form a disulfide. The Extracellular segment spans residues cysteine 349 to asparagine 356. Residues valine 357–leucine 382 traverse the membrane as a helical segment. The NPxxY motif; important for ligand-induced conformation changes and signaling motif lies at asparagine 376–tyrosine 380. The Cytoplasmic segment spans residues phenylalanine 383–valine 471. The PDZ-binding motif lies at serine 469–valine 471.

This sequence belongs to the G-protein coupled receptor 1 family. In terms of assembly, interacts (via C-terminus) with MPDZ and PATJ. May interact (via C-terminus) with MPP3, PRDX6, DLG4, DLG1, CASK, APBA1 and MAGI2. Interacts with GRM2 and DRD2; this may affect signaling. In terms of tissue distribution, detected in adult intestine, especially in mucosal epithelium, longitudinal and circular layers of muscularis externa and myenteric plexuses. Highly expressed in Paneth cells, and detected at lower levels in enterocytes (at protein level). Detected in brain cortex.

The protein localises to the cell membrane. It is found in the cell projection. Its subcellular location is the axon. The protein resides in the cytoplasmic vesicle. It localises to the membrane. The protein localises to the caveola. It is found in the dendrite. Its subcellular location is the presynapse. With respect to regulation, G-protein coupled receptor activity is regulated by lipids: oleamide increases HTR2A-mediated activity. G-protein coupled receptor for 5-hydroxytryptamine (serotonin). Also functions as a receptor for various drugs and psychoactive substances, including mescaline, psilocybin, 1-(2,5-dimethoxy-4-iodophenyl)-2-aminopropane (DOI) and lysergic acid diethylamide (LSD). Ligand binding causes a conformation change that triggers signaling via guanine nucleotide-binding proteins (G proteins) and modulates the activity of downstream effectors. HTR2A is coupled to G(q)/G(11) G alpha proteins and activates phospholipase C-beta, releasing diacylglycerol (DAG) and inositol 1,4,5-trisphosphate (IP3) second messengers that modulate the activity of phosphatidylinositol 3-kinase and promote the release of Ca(2+) ions from intracellular stores, respectively. Beta-arrestin family members inhibit signaling via G proteins and mediate activation of alternative signaling pathways. Affects neural activity, perception, cognition and mood. Plays a role in the regulation of behavior, including responses to anxiogenic situations and psychoactive substances. Plays a role in intestinal smooth muscle contraction, and may play a role in arterial vasoconstriction. This Rattus norvegicus (Rat) protein is 5-hydroxytryptamine receptor 2A (Htr2a).